The following is a 130-amino-acid chain: Small ribosomal subunit protein uS8 (130 aa).

Belongs to the universal ribosomal protein uS8 family. In terms of assembly, part of the 30S ribosomal subunit.

Functionally, one of the primary rRNA binding proteins, it binds directly to 16S rRNA central domain where it helps coordinate assembly of the platform of the 30S subunit. This chain is Small ribosomal subunit protein uS8, found in Methanoculleus marisnigri (strain ATCC 35101 / DSM 1498 / JR1).